The following is a 466-amino-acid chain: Ribulose bisphosphate carboxylase (466 aa).

Asn-111 provides a ligand contact to substrate. Lys-166 acts as the Proton acceptor in catalysis. Lys-168 contributes to the substrate binding site. Mg(2+) contacts are provided by Lys-191, Asp-193, and Glu-194. At Lys-191 the chain carries N6-carboxylysine. The Proton acceptor role is filled by His-287. Residues Arg-288, His-321, and Ser-368 each coordinate substrate.

Belongs to the RuBisCO large chain family. Type II subfamily. As to quaternary structure, homodimer. Mg(2+) is required as a cofactor.

The catalysed reaction is 2 (2R)-3-phosphoglycerate + 2 H(+) = D-ribulose 1,5-bisphosphate + CO2 + H2O. The enzyme catalyses D-ribulose 1,5-bisphosphate + O2 = 2-phosphoglycolate + (2R)-3-phosphoglycerate + 2 H(+). Functionally, ruBisCO catalyzes two reactions: the carboxylation of D-ribulose 1,5-bisphosphate, the primary event in carbon dioxide fixation, as well as the oxidative fragmentation of the pentose substrate. Both reactions occur simultaneously and in competition at the same active site. In Rhodospirillum rubrum (strain ATCC 11170 / ATH 1.1.1 / DSM 467 / LMG 4362 / NCIMB 8255 / S1), this protein is Ribulose bisphosphate carboxylase.